Here is a 351-residue protein sequence, read N- to C-terminus: Chorismate synthase (351 aa).

Positions 39-60 (EDIQRDLERRRPGKRLTSPRGE) are disordered. The NADP(+) site is built by Arg-48 and Arg-53. FMN-binding positions include 124–126 (RSS), Ala-276, 291–295 (KPIPS), and Arg-317.

Belongs to the chorismate synthase family. As to quaternary structure, homotetramer. Requires FMNH2 as cofactor.

It carries out the reaction 5-O-(1-carboxyvinyl)-3-phosphoshikimate = chorismate + phosphate. It functions in the pathway metabolic intermediate biosynthesis; chorismate biosynthesis; chorismate from D-erythrose 4-phosphate and phosphoenolpyruvate: step 7/7. Catalyzes the anti-1,4-elimination of the C-3 phosphate and the C-6 proR hydrogen from 5-enolpyruvylshikimate-3-phosphate (EPSP) to yield chorismate, which is the branch point compound that serves as the starting substrate for the three terminal pathways of aromatic amino acid biosynthesis. This reaction introduces a second double bond into the aromatic ring system. This chain is Chorismate synthase, found in Syntrophobacter fumaroxidans (strain DSM 10017 / MPOB).